The sequence spans 1982 residues: CASP8-associated protein 2 (1982 aa).

Ala2 is subject to N-acetylalanine. Residue Ser20 is modified to Phosphoserine. Over residues 159–191 (VKTKDLKSRSPHLDDCSKTDHRAKSDVSKDVHH) the composition is skewed to basic and acidic residues. The disordered stretch occupies residues 159-552 (VKTKDLKSRS…ESGPNETKNK (394 aa)). Ser194 carries the phosphoserine modification. Basic and acidic residues predominate over residues 198–210 (LEKEGKPHSDKRS). Polar residues predominate over residues 225–240 (GVWSRSHYQVGEGSSN). Residues 286-395 (GHPEKYGKGE…ERASLPHSKN (110 aa)) are compositionally biased toward basic and acidic residues. Over residues 396–405 (EITFSHNSSK) the composition is skewed to polar residues. Composition is skewed to basic and acidic residues over residues 406–423 (YHLEERRGWEDCKRDKSV), 444–455 (KNIDSKEVDAMH), and 463–524 (KAER…KGEV). Residue Ser567 is modified to Phosphoserine. The interval 569-593 (AKKQPVSQDNQHKITDIPKSSGVCD) is disordered. Phosphoserine occurs at positions 658, 815, and 875. Disordered stretches follow at residues 875–1017 (SPPQ…DKVM), 1157–1188 (FGRDSDEGKLEKTSKQNAQYSNSQKRSVDNSN), and 1251–1283 (ERSLEVHCPSTPKSEKNEGSSIEDAQTSQHATL). Residues 894–904 (SAHSTSKSQSD) show a composition bias toward polar residues. 4 stretches are compositionally biased toward basic and acidic residues: residues 905–924 (LNKENQKPIYKSDKCTEADT), 936–965 (GEIRSDSETSKPQESFEKNSKRRVSADVRK), 999–1016 (KRPDKSSRSSKTEKKDKV), and 1157–1170 (FGRDSDEGKLEKTS). Ser940 bears the Phosphoserine mark. The residue at position 1161 (Ser1161) is a Phosphoserine. 2 stretches are compositionally biased toward polar residues: residues 1171 to 1181 (KQNAQYSNSQK) and 1269 to 1281 (GSSIEDAQTSQHA). The residue at position 1343 (Lys1343) is an N6-acetyllysine. The short motif at 1683-1687 (YVDLT) is the SUMO interaction motif 1 (SIM); mediates the binding to polysumoylated substrates element. Residues 1709-1982 (DQLGCSGGNL…MKLFEKSKCR (274 aa)) are NCOA2-binding. Residues 1737–1741 (FIDLT) carry the SUMO interaction motif 2 (SIM); mediates the binding to polysumoylated substrates motif. Positions 1794–1798 (YIDLT) match the SUMO interaction motif 3 (SIM); mediates the binding to polysumoylated substrates motif. The tract at residues 1803–1909 (SSCEVKKDEL…IKDSSAALAT (107 aa)) is disordered. Residues 1851–1865 (KETDLTNKEKTKKPT) show a composition bias toward basic and acidic residues.

Self-associates. Component of the death-inducing signaling complex (DISC) with CASP8, FADD and FAS. Interacts with NCOA2 and NCOA3. Interacts with SRRT. Interacts with TRAF2. Interacts with NPAT. Interacts (via SIM domains) with SUMO1 and SUMO2. Interacts with SP100; may negatively regulate CASP8AP2 export from the nucleus to the cytoplasm.

The protein resides in the cytoplasm. It is found in the nucleus. Its subcellular location is the PML body. The protein localises to the mitochondrion. Participates in TNF-alpha-induced blockade of glucocorticoid receptor (GR) transactivation at the nuclear receptor coactivator level, upstream and independently of NF-kappa-B. Suppresses both NCOA2- and NCOA3-induced enhancement of GR transactivation. Involved in TNF-alpha-induced activation of NF-kappa-B via a TRAF2-dependent pathway. Acts as a downstream mediator for CASP8-induced activation of NF-kappa-B. Required for the activation of CASP8 in FAS-mediated apoptosis. Required for histone gene transcription and progression through S phase. The protein is CASP8-associated protein 2 of Homo sapiens (Human).